Consider the following 619-residue polypeptide: DBH-like monooxygenase protein 2 (619 aa).

The first 21 residues, 1–21 (MACVLLFRLFLLLVLAAFSQG), serve as a signal peptide directing secretion. The Extracellular portion of the chain corresponds to 22–594 (KRLGPTSPLR…LSGSNTATLR (573 aa)). Residues 40–156 (RAVFLRWDFD…DTMRVLAAYG (117 aa)) form the DOMON domain. Y209 is an active-site residue. Disulfide bonds link C211-C261 and C248-C271. Residues H241 and H242 each contribute to the Cu cation site. N250 carries an N-linked (GlcNAc...) asparagine glycan. Cu cation contacts are provided by H309, H390, and H392. 2 disulfides stabilise this stretch: C366/C481 and C444/C466. H390 is an active-site residue. N405 is a glycosylation site (N-linked (GlcNAc...) asparagine). M465 contacts Cu cation. The N-linked (GlcNAc...) asparagine glycan is linked to N477. Residues 595–615 (PLPMIAVLFLQGSLSCLLAML) traverse the membrane as a helical segment. Topologically, residues 616-619 (QTGV) are cytoplasmic.

It belongs to the copper type II ascorbate-dependent monooxygenase family. Requires Cu(2+) as cofactor. As to expression, expressed at low levels in thymus and testis.

It is found in the membrane. The chain is DBH-like monooxygenase protein 2 (Moxd2) from Mus musculus (Mouse).